Reading from the N-terminus, the 364-residue chain is Uroporphyrinogen decarboxylase (364 aa).

Residues R34, A36, R38, R47, D83, Y161, S216, and H336 each coordinate coproporphyrinogen I. Coproporphyrinogen III contacts are provided by R34, A36, and R38. Residues D83, Y161, S216, and H336 each coordinate coproporphyrinogen III.

Belongs to the uroporphyrinogen decarboxylase family. In terms of assembly, homodimer.

The protein localises to the cytoplasm. Its subcellular location is the cytosol. It carries out the reaction uroporphyrinogen III + 4 H(+) = coproporphyrinogen III + 4 CO2. The catalysed reaction is uroporphyrinogen I + 4 H(+) = coproporphyrinogen I + 4 CO2. Its pathway is porphyrin-containing compound metabolism; protoporphyrin-IX biosynthesis; coproporphyrinogen-III from 5-aminolevulinate: step 4/4. Its function is as follows. Catalyzes the sequential decarboxylation of the four acetate side chains of uroporphyrinogen to form coproporphyrinogen and participates in the fifth step in the heme biosynthetic pathway. Isomer I or isomer III of uroporphyrinogen may serve as substrate, but only coproporphyrinogen III can ultimately be converted to heme. In vitro also decarboxylates pentacarboxylate porphyrinogen I. This chain is Uroporphyrinogen decarboxylase, found in Rattus norvegicus (Rat).